Here is a 577-residue protein sequence, read N- to C-terminus: MHWLRKVQGLCTLWGTQMSSRTLYINSRQLVSLQWGHQEVPAKFNFASDVLDHWADMEKAGKRLPSPALWWVNGKGKELMWNFRELSENSQQAANILSGACGLQRGDRVAVMLPRVPEWWLVILGCIRAGLIFMPGTIQMKSTDILYRLQMSKAKAIVAGDEVIQEVDTVASECPSLRIKLLVSEKSCDGWLNFKKLLNEASTTHHCVETGSQEASAIYFTSGTSGLPKMAEHSYSSLGLKAKMDAGWTGLQASDIMWTISDTGWILNILGSLLESWTLGACTFVHLLPKFDPLVILKTLSSYPIKSMMGAPIVYRMLLQQDLSSYKFPHLQNCLAGGESLLPETLENWRAQTGLDIREFYGQTETGLTCMVSKTMKIKPGYMGTAASCYDVQVIDDKGNVLPPGTEGDIGIRVKPIRPIGIFSGYVENPDKTAANIRGDFWLLGDRGIKDEDGYFQFMGRADDIINSSGYRIGPSEVENALMKHPAVVETAVISSPDPVRGEVVKAFVILASQFLSHDPEQLTKELQQHVKSVTAPYKYPRKIEFVLNLPKTVTGKIQRTKLRDKEWKMSGKARAQ.

A mitochondrion-targeting transit peptide spans 1–46 (MHWLRKVQGLCTLWGTQMSSRTLYINSRQLVSLQWGHQEVPAKFNF). CoA is bound at residue Gln139. ATP is bound by residues 221–229 (TSGTSGLPK), 359–364 (EFYGQT), Asp446, and Arg461. Substrate is bound at residue Thr364. A CoA-binding site is contributed by 469-471 (SGY). Substrate is bound at residue Arg472. Residue Arg501 participates in CoA binding. Position 513 is a phosphoserine (Ser513). Residues Lys532 and 540-542 (YPR) each bind CoA. Lys557 provides a ligand contact to ATP.

This sequence belongs to the ATP-dependent AMP-binding enzyme family. As to quaternary structure, monomer. Mg(2+) serves as cofactor. It depends on Mn(2+) as a cofactor. In terms of tissue distribution, detected in liver.

The protein localises to the mitochondrion. It catalyses the reaction a medium-chain fatty acid + ATP + CoA = a medium-chain fatty acyl-CoA + AMP + diphosphate. The enzyme catalyses benzoate + ATP + CoA = benzoyl-CoA + AMP + diphosphate. It carries out the reaction hexanoate + ATP + CoA = hexanoyl-CoA + AMP + diphosphate. The catalysed reaction is butanoate + ATP + CoA = butanoyl-CoA + AMP + diphosphate. It catalyses the reaction octanoate + ATP + CoA = octanoyl-CoA + AMP + diphosphate. The enzyme catalyses decanoate + ATP + CoA = decanoyl-CoA + AMP + diphosphate. With respect to regulation, activated by monovalent cations, such as potassium, rubidium or ammonium. Its function is as follows. Catalyzes the activation of fatty acids by CoA to produce an acyl-CoA, the first step in fatty acid metabolism. Capable of activating medium-chain fatty acids (e.g. butyric (C4) to decanoic (C10) acids), and certain carboxylate-containing xenobiotics, e.g. benzoate. This is Acyl-coenzyme A synthetase ACSM2B, mitochondrial (ACSM2B) from Homo sapiens (Human).